Reading from the N-terminus, the 107-residue chain is EIVLTQSPAITAASLGQKVTITCSASSSVSSLHWYQQKSGTSPKPWIYEISKLASGVPARFSGSGSGTSYSLTINTMEAEDAAIYYCQQWTYPLITFGAGTKLELKR.

The interval 1–23 (EIVLTQSPAITAASLGQKVTITC) is framework-1. C23 and C87 form a disulfide bridge. A complementarity-determining-1 region spans residues 24-33 (SASSSVSSLH). Residues 34–48 (WYQQKSGTSPKPWIY) form a framework-2 region. The interval 49-55 (EISKLAS) is complementarity-determining-2. The tract at residues 56-87 (GVPARFSGSGSGTSYSLTINTMEAEDAAIYYC) is framework-3. The tract at residues 88 to 96 (QQWTYPLIT) is complementarity-determining-3. Residues 97-106 (FGAGTKLELK) are framework-4.

The protein is Ig kappa chain V-VI region J539 of Mus musculus (Mouse).